A 374-amino-acid polypeptide reads, in one-letter code: PqqA peptide cyclase (374 aa).

The region spanning 7-222 is the Radical SAM core domain; it reads VTPPLWLLAE…VADYRQRMGA (216 aa). The [4Fe-4S] cluster site is built by Cys-21, Cys-25, and Cys-28.

This sequence belongs to the radical SAM superfamily. PqqE family. Interacts with PqqD. The interaction is necessary for activity of PqqE. [4Fe-4S] cluster is required as a cofactor.

It carries out the reaction [PQQ precursor protein] + S-adenosyl-L-methionine = E-Y cross-linked-[PQQ precursor protein] + 5'-deoxyadenosine + L-methionine + H(+). Its pathway is cofactor biosynthesis; pyrroloquinoline quinone biosynthesis. In terms of biological role, catalyzes the cross-linking of a glutamate residue and a tyrosine residue in the PqqA protein as part of the biosynthesis of pyrroloquinoline quinone (PQQ). In Kluyvera intermedia (Enterobacter intermedius), this protein is PqqA peptide cyclase.